The primary structure comprises 256 residues: Small ribosomal subunit protein eS1 (256 aa).

Over residues 1-18 (MAVGKNKRLSKGKKGIKK) the composition is skewed to basic residues. The interval 1–20 (MAVGKNKRLSKGKKGIKKRT) is disordered. N-acetylalanine; partial is present on Ala-2.

Belongs to the eukaryotic ribosomal protein eS1 family. As to quaternary structure, component of the small ribosomal subunit. Mature ribosomes consist of a small (40S) and a large (60S) subunit. The 40S subunit contains about 33 different proteins and 1 molecule of RNA (18S). The 60S subunit contains about 49 different proteins and 3 molecules of RNA (25S, 5.8S and 5S).

Its subcellular location is the cytoplasm. The chain is Small ribosomal subunit protein eS1 (rps1) from Aspergillus flavus (strain ATCC 200026 / FGSC A1120 / IAM 13836 / NRRL 3357 / JCM 12722 / SRRC 167).